A 422-amino-acid polypeptide reads, in one-letter code: Calpain-2 catalytic subunit (422 aa).

The Calpain catalytic domain maps to 1-66; it reads QKLIRIRNPW…YSRLEICNLT (66 aa). N8 is an active-site residue. Ca(2+) contacts are provided by E14, D21, and E45. Residues 67–236 are domain III; the sequence is PDTLTSDTYK…KKADYQAVDD (170 aa). The tract at residues 237–251 is linker; the sequence is EIEADLEEADVSEDD. The domain IV stretch occupies residues 252 to 422; that stretch reads IDDGFRRLFA…LISWLCFSVL (171 aa). A264, D267, E269, E274, D307, D309, T311, K313, E318, D337, D339, S341, T343, E348, D380, and N383 together coordinate Ca(2+). EF-hand domains are found at residues 294-327 and 324-359; these read LSIETCKIMVDMLDSDGTGKLGLKEFYVLWTKIQ and TKIQKYQKIYREIDVDRSGTMNSYEMRKALEEAGFK. Positions 389 to 422 constitute an EF-hand 3 domain; sequence VRLETLFKIFKQLDPDNTGMIQLDLISWLCFSVL.

It belongs to the peptidase C2 family. In terms of assembly, forms a heterodimer with a small (regulatory) subunit (CAPNS1). Interacts with CPEB3; this leads to cleavage of CPEB3. Ca(2+) serves as cofactor. In terms of tissue distribution, ubiquitous.

Its subcellular location is the cytoplasm. It localises to the cell membrane. The enzyme catalyses Broad endopeptidase specificity.. With respect to regulation, activated by 200-1000 micromolar concentrations of calcium and inhibited by calpastatin. In terms of biological role, calcium-regulated non-lysosomal thiol-protease which catalyzes limited proteolysis of substrates involved in cytoskeletal remodeling and signal transduction. Proteolytically cleaves MYOC at 'Arg-226'. Proteolytically cleaves CPEB3 following neuronal stimulation which abolishes CPEB3 translational repressor activity, leading to translation of CPEB3 target mRNAs. The polypeptide is Calpain-2 catalytic subunit (CAPN2) (Oryctolagus cuniculus (Rabbit)).